The chain runs to 122 residues: Lectin A (122 aa).

Tyr-38 contacts Ca(2+). An alpha-D-galactoside is bound by residues Glu-44, Gln-57, and Asp-96. Residues Asp-96, Thr-100, Asp-103, and Asn-104 each coordinate Ca(2+). Asp-103 contributes to the an alpha-D-galactoside binding site.

It belongs to the LecA/PllA lectin family. As to quaternary structure, homotetramer.

Functionally, lectin that specifically binds alpha-galactoside-terminating glycoconjugates. Shows high apparent binding to the alpha-Gal epitope (Gal-alpha-1,3-Gal-beta-1,4-GlcNAc terminating glycans) as well as to Gal-alpha-1,4-GlcNAc and Gal-alpha-1,3-GalNAc. Gal-alpha-1,3-GalNAc may be one natural ligand bound by PllA both in the nematode symbiont and in infected insects. This chain is Lectin A, found in Photorhabdus laumondii subsp. laumondii (strain DSM 15139 / CIP 105565 / TT01) (Photorhabdus luminescens subsp. laumondii).